The chain runs to 369 residues: Ferredoxin--NADP reductase 2 (369 aa).

The interval 1 to 23 (MDLSIPNPVADTTKQVDGGSPAG) is disordered. The FAD site is built by D58, Q66, Y71, V111, F146, D311, and T352.

This sequence belongs to the ferredoxin--NADP reductase type 2 family. In terms of assembly, homodimer. The cofactor is FAD.

It catalyses the reaction 2 reduced [2Fe-2S]-[ferredoxin] + NADP(+) + H(+) = 2 oxidized [2Fe-2S]-[ferredoxin] + NADPH. The protein is Ferredoxin--NADP reductase 2 of Cupriavidus necator (strain ATCC 17699 / DSM 428 / KCTC 22496 / NCIMB 10442 / H16 / Stanier 337) (Ralstonia eutropha).